Reading from the N-terminus, the 295-residue chain is Protoheme IX farnesyltransferase (295 aa).

9 helical membrane-spanning segments follow: residues 27–46 (IMYLVVLTGITGMIIAPGSI), 50–72 (IAIISTLCIALGSGAAGAINMWY), 93–115 (ISKSSAIELGLVLSVISVTVMMI), 119–136 (YISGILLAISIGFYSFAY), 148–168 (IVIGGIAGAIPPIIGWTSVTS), 175–195 (LILFLIIFMWTPPHFWALSLL), 219–239 (VHILVYSIVLFIITLLPGLFL), 244–264 (LYEICAIPLGITFLFHAFKVF), and 275–295 (MFTYSVAYLFILFICIILASF).

The protein belongs to the UbiA prenyltransferase family. Protoheme IX farnesyltransferase subfamily.

It localises to the cell inner membrane. The enzyme catalyses heme b + (2E,6E)-farnesyl diphosphate + H2O = Fe(II)-heme o + diphosphate. It participates in porphyrin-containing compound metabolism; heme O biosynthesis; heme O from protoheme: step 1/1. Converts heme B (protoheme IX) to heme O by substitution of the vinyl group on carbon 2 of heme B porphyrin ring with a hydroxyethyl farnesyl side group. The protein is Protoheme IX farnesyltransferase of Ehrlichia canis (strain Jake).